Consider the following 183-residue polypeptide: Negative modulator of initiation of replication (183 aa).

Residues 43–70 (VNDTQPVSAPAPSKAAPSAGNESRPQDR) are disordered. Over residues 50-61 (SAPAPSKAAPSA) the composition is skewed to low complexity. 3 interaction with DNA regions span residues 89–90 (AV), 118–122 (RTRIY), and 152–158 (NTNTGRK).

Belongs to the SeqA family. As to quaternary structure, homodimer. Polymerizes to form helical filaments.

It localises to the cytoplasm. Negative regulator of replication initiation, which contributes to regulation of DNA replication and ensures that replication initiation occurs exactly once per chromosome per cell cycle. Binds to pairs of hemimethylated GATC sequences in the oriC region, thus preventing assembly of replication proteins and re-initiation at newly replicated origins. Repression is relieved when the region becomes fully methylated. The sequence is that of Negative modulator of initiation of replication from Pantoea ananatis (strain AJ13355).